The sequence spans 428 residues: Gamma-glutamyl phosphate reductase (428 aa).

It belongs to the gamma-glutamyl phosphate reductase family.

Its subcellular location is the cytoplasm. The catalysed reaction is L-glutamate 5-semialdehyde + phosphate + NADP(+) = L-glutamyl 5-phosphate + NADPH + H(+). It participates in amino-acid biosynthesis; L-proline biosynthesis; L-glutamate 5-semialdehyde from L-glutamate: step 2/2. Catalyzes the NADPH-dependent reduction of L-glutamate 5-phosphate into L-glutamate 5-semialdehyde and phosphate. The product spontaneously undergoes cyclization to form 1-pyrroline-5-carboxylate. This is Gamma-glutamyl phosphate reductase from Mesorhizobium japonicum (strain LMG 29417 / CECT 9101 / MAFF 303099) (Mesorhizobium loti (strain MAFF 303099)).